Here is a 226-residue protein sequence, read N- to C-terminus: Ribosomal RNA large subunit methyltransferase E (226 aa).

Residues 1–25 (MVKPPAGGNEGGRGKPARLKTAYGR) are disordered. 5 residues coordinate S-adenosyl-L-methionine: Gly82, Trp84, Asp100, Asp116, and Asp140. The active-site Proton acceptor is Lys180.

This sequence belongs to the class I-like SAM-binding methyltransferase superfamily. RNA methyltransferase RlmE family.

The protein resides in the cytoplasm. It catalyses the reaction uridine(2552) in 23S rRNA + S-adenosyl-L-methionine = 2'-O-methyluridine(2552) in 23S rRNA + S-adenosyl-L-homocysteine + H(+). Specifically methylates the uridine in position 2552 of 23S rRNA at the 2'-O position of the ribose in the fully assembled 50S ribosomal subunit. This is Ribosomal RNA large subunit methyltransferase E from Caulobacter vibrioides (strain ATCC 19089 / CIP 103742 / CB 15) (Caulobacter crescentus).